A 363-amino-acid chain; its full sequence is RNA polymerase I-specific transcription initiation factor RRN5 (363 aa).

The interval 301–344 (LSRRDAPPVHQDENQENQENQENQEQDNTASEGESEAERDEIDE) is disordered. A compositionally biased stretch (basic and acidic residues) spans 302–313 (SRRDAPPVHQDE). Low complexity predominate over residues 317–328 (NQENQENQEQDN). Over residues 333–344 (GESEAERDEIDE) the composition is skewed to acidic residues.

As to quaternary structure, component of the UAF (upstream activation factor) complex which consists of UAF30, RRN5, RRN9, RRN10, and histones H3 and H4.

It localises to the nucleus. It is found in the nucleolus. In terms of biological role, component of the UAF (upstream activation factor) complex which interacts with the upstream element of the RNA polymerase I promoter and forms a stable preinitiation complex. Together with SPT15/TBP UAF seems to stimulate basal transcription to a fully activated level. This chain is RNA polymerase I-specific transcription initiation factor RRN5 (RRN5), found in Saccharomyces cerevisiae (strain ATCC 204508 / S288c) (Baker's yeast).